The primary structure comprises 185 residues: Monooxygenase hypC (185 aa).

3 helical membrane passes run threonine 35–leucine 55, glycine 75–tyrosine 95, and proline 106–alanine 126. The N-linked (GlcNAc...) asparagine glycan is linked to asparagine 129. Residues alanine 165–phenylalanine 185 traverse the membrane as a helical segment.

Belongs to the anthrone oxygenase family.

It is found in the membrane. It functions in the pathway mycotoxin biosynthesis. Its function is as follows. Monooxygenase; part of the fragmented gene cluster that mediates the biosynthesis of dothistromin (DOTH), a polyketide toxin very similar in structure to the aflatoxin precursor, versicolorin B. The first step of the pathway is the conversion of acetate to norsolorinic acid (NOR) and requires the fatty acid synthase subunits hexA and hexB, as well as the polyketide synthase pksA. PksA combines a hexanoyl starter unit and 7 malonyl-CoA extender units to synthesize the precursor NOR. The hexanoyl starter unit is provided to the acyl-carrier protein (ACP) domain by the fungal fatty acid synthase hexA/hexB. The second step is the conversion of NOR to averantin (AVN) and requires the norsolorinic acid ketoreductase nor1, which catalyzes the dehydration of norsolorinic acid to form (1'S)-averantin. The cytochrome P450 monooxygenase avnA then catalyzes the hydroxylation of AVN to 5'hydroxyaverantin (HAVN). The next step is performed by adhA that transforms HAVN to averufin (AVF). Averufin might then be converted to hydroxyversicolorone by cypX and avfA. Hydroxyversicolorone is further converted versiconal hemiacetal acetate (VHA) by moxY. VHA is then the substrate for the versiconal hemiacetal acetate esterase est1 to yield versiconal (VAL). Versicolorin B synthase vbsA then converts VAL to versicolorin B (VERB) by closing the bisfuran ring. Then, the activity of the versicolorin B desaturase verB leads to versicolorin A (VERA). DotB, a predicted chloroperoxidase, may perform epoxidation of the A-ring of VERA. Alternatively, a cytochrome P450, such as cypX or avnA could catalyze this step. It is also possible that another, uncharacterized, cytochrome P450 enzyme is responsible for this step. Opening of the epoxide could potentially be achieved by the epoxide hydrolase epoA. However, epoA seems not to be required for DOTH biosynthesis, but other epoxide hydrolases may have the ability to complement this hydrolysis. Alternatively, opening of the epoxide ring could be achieved non-enzymatically. The next step is the deoxygenation of ring A to yield the 5,8-dihydroxyanthraquinone which is most likely catalyzed by the NADPH dehydrogenase encoded by ver1. The last stages of DOTH biosynthesis are proposed to involve hydroxylation of the bisfuran. OrdB and norB might have oxidative roles here. An alternative possibility is that cytochrome P450 monoogenases such as avnA and cypX might perform these steps in addition to previously proposed steps. This is Monooxygenase hypC from Dothistroma septosporum (strain NZE10 / CBS 128990) (Red band needle blight fungus).